The primary structure comprises 290 residues: 4-hydroxy-tetrahydrodipicolinate synthase (290 aa).

Ser44 contacts pyruvate. Residue Tyr132 is the Proton donor/acceptor of the active site. Lys161 acts as the Schiff-base intermediate with substrate in catalysis. Pyruvate is bound at residue Val202.

The protein belongs to the DapA family. Homotetramer; dimer of dimers.

The protein localises to the cytoplasm. The enzyme catalyses L-aspartate 4-semialdehyde + pyruvate = (2S,4S)-4-hydroxy-2,3,4,5-tetrahydrodipicolinate + H2O + H(+). Its pathway is amino-acid biosynthesis; L-lysine biosynthesis via DAP pathway; (S)-tetrahydrodipicolinate from L-aspartate: step 3/4. Its function is as follows. Catalyzes the condensation of (S)-aspartate-beta-semialdehyde [(S)-ASA] and pyruvate to 4-hydroxy-tetrahydrodipicolinate (HTPA). This chain is 4-hydroxy-tetrahydrodipicolinate synthase, found in Hydrogenobaculum sp. (strain Y04AAS1).